A 605-amino-acid polypeptide reads, in one-letter code: Acetoin dehydrogenase operon transcriptional activator AcoR (605 aa).

In terms of domain architecture, Sigma-54 factor interaction spans 295–520 (VIGQSGRSQA…LFNVFERLSI (226 aa)). ATP is bound by residues 323–330 (GETGTGKE) and 387–396 (ANQGTLFLDE). Positions 578–597 (VSQAAKISGIPRSTFYKRLK) form a DNA-binding region, H-T-H motif.

Functionally, acts as a transcriptional activator of the acoABCL operon encoding the acetoin dehydrogenase complex. This chain is Acetoin dehydrogenase operon transcriptional activator AcoR (acoR), found in Bacillus subtilis (strain 168).